A 184-amino-acid polypeptide reads, in one-letter code: Photosystem I assembly protein Ycf4 (184 aa).

Transmembrane regions (helical) follow at residues 22 to 42 (LCWAFILVLGAIGFSLVGFSS) and 64 to 84 (IVMCFYGIAGIFLGFYLWCTI).

This sequence belongs to the Ycf4 family.

The protein resides in the plastid. The protein localises to the chloroplast thylakoid membrane. Its function is as follows. Seems to be required for the assembly of the photosystem I complex. The polypeptide is Photosystem I assembly protein Ycf4 (Angiopteris evecta (Mule's foot fern)).